The following is a 350-amino-acid chain: Heme A synthase (350 aa).

The next 8 membrane-spanning stretches (helical) occupy residues 16 to 36 (LARWLFVVAFMVVAIVAVGGI), 77 to 97 (FQLVNGPAGMTLATYKFIFFW), 101 to 121 (HRLLARTIGLVFAAPLAWFWI), 136 to 156 (LLALGALQGAVGWWMVKSGIV), 170 to 190 (LLVALFTLGGLVWTALDLVAL), 201 to 221 (GIGLLALAMLVLQLFYGALVA), 265 to 285 (VFLVHFIHRWWAWAVVAVLVV), and 299 to 321 (IVLHSVFGTQVLLGIFTVWSGVA). Position 272 (His272) interacts with heme. Position 328 (His328) interacts with heme.

The protein belongs to the COX15/CtaA family. Type 2 subfamily. As to quaternary structure, interacts with CtaB. Heme b is required as a cofactor.

The protein resides in the cell membrane. The catalysed reaction is Fe(II)-heme o + 2 A + H2O = Fe(II)-heme a + 2 AH2. It functions in the pathway porphyrin-containing compound metabolism; heme A biosynthesis; heme A from heme O: step 1/1. Its function is as follows. Catalyzes the conversion of heme O to heme A by two successive hydroxylations of the methyl group at C8. The first hydroxylation forms heme I, the second hydroxylation results in an unstable dihydroxymethyl group, which spontaneously dehydrates, resulting in the formyl group of heme A. This Novosphingobium aromaticivorans (strain ATCC 700278 / DSM 12444 / CCUG 56034 / CIP 105152 / NBRC 16084 / F199) protein is Heme A synthase.